A 358-amino-acid chain; its full sequence is 3-isopropylmalate dehydrogenase (358 aa).

4 residues coordinate substrate: Arg-92, Arg-102, Arg-130, and Asp-224. Mg(2+) is bound by residues Asp-224, Asp-248, and Asp-252. 282–294 (GSAPDIAGQGIAN) is an NAD(+) binding site.

The protein belongs to the isocitrate and isopropylmalate dehydrogenases family. LeuB type 1 subfamily. As to quaternary structure, homodimer. Requires Mg(2+) as cofactor. Mn(2+) serves as cofactor.

It localises to the cytoplasm. It carries out the reaction (2R,3S)-3-isopropylmalate + NAD(+) = 4-methyl-2-oxopentanoate + CO2 + NADH. Its pathway is amino-acid biosynthesis; L-leucine biosynthesis; L-leucine from 3-methyl-2-oxobutanoate: step 3/4. Catalyzes the oxidation of 3-carboxy-2-hydroxy-4-methylpentanoate (3-isopropylmalate) to 3-carboxy-4-methyl-2-oxopentanoate. The product decarboxylates to 4-methyl-2 oxopentanoate. This chain is 3-isopropylmalate dehydrogenase, found in Bordetella parapertussis (strain 12822 / ATCC BAA-587 / NCTC 13253).